The chain runs to 146 residues: uncharacterized protein (146 aa).

The Toprim domain occupies 31–119 (EKVMIVEGKS…RAYKEVAAAP (89 aa)).

This is an uncharacterized protein from Bacillus subtilis (strain 168).